A 396-amino-acid polypeptide reads, in one-letter code: Stearoyl-[acyl-carrier-protein] 9-desaturase 5, chloroplastic (396 aa).

Residues 1–29 constitute a chloroplast transit peptide; the sequence is MAMAMDRIVFSPSSYVYRPCQARGSRSSR. Fe cation contacts are provided by Glu-137, Glu-175, His-178, Glu-228, Glu-261, and His-264.

It belongs to the fatty acid desaturase type 2 family. As to quaternary structure, homodimer. Fe(2+) serves as cofactor. Ubiquitously expressed with a preference in leaves, flowers and stems.

Its subcellular location is the plastid. It is found in the chloroplast stroma. The enzyme catalyses octadecanoyl-[ACP] + 2 reduced [2Fe-2S]-[ferredoxin] + O2 + 2 H(+) = (9Z)-octadecenoyl-[ACP] + 2 oxidized [2Fe-2S]-[ferredoxin] + 2 H2O. Its pathway is lipid metabolism; fatty acid metabolism. Its function is as follows. Converts stearoyl-ACP to oleoyl-ACP by introduction of a cis double bond between carbons 9 and 10 of the acyl chain. The protein is Stearoyl-[acyl-carrier-protein] 9-desaturase 5, chloroplastic (S-ACP-DES5) of Arabidopsis thaliana (Mouse-ear cress).